Here is a 432-residue protein sequence, read N- to C-terminus: Adenylosuccinate synthetase (432 aa).

GTP contacts are provided by residues 12–18 (GDEGKGK) and 40–42 (GHT). Asp-13 acts as the Proton acceptor in catalysis. Residues Asp-13 and Gly-40 each coordinate Mg(2+). Residues 13-16 (DEGK), 38-41 (NAGH), Thr-130, Arg-144, Gln-225, Thr-240, and Arg-304 each bind IMP. His-41 serves as the catalytic Proton donor. Substrate is bound at residue 300 to 306 (STTGRPR). Residues Arg-306, 332-334 (KLD), and 414-416 (SVG) each bind GTP.

Belongs to the adenylosuccinate synthetase family. In terms of assembly, homodimer. Mg(2+) is required as a cofactor.

It is found in the cytoplasm. The catalysed reaction is IMP + L-aspartate + GTP = N(6)-(1,2-dicarboxyethyl)-AMP + GDP + phosphate + 2 H(+). It functions in the pathway purine metabolism; AMP biosynthesis via de novo pathway; AMP from IMP: step 1/2. In terms of biological role, plays an important role in the de novo pathway of purine nucleotide biosynthesis. Catalyzes the first committed step in the biosynthesis of AMP from IMP. The chain is Adenylosuccinate synthetase from Citrifermentans bemidjiense (strain ATCC BAA-1014 / DSM 16622 / JCM 12645 / Bem) (Geobacter bemidjiensis).